Here is a 268-residue protein sequence, read N- to C-terminus: 4-hydroxy-tetrahydrodipicolinate reductase (268 aa).

Residues 9–14 (GVCGRM), E35, 99–101 (GTT), and 123–126 (APNY) each bind NAD(+). Residue H156 is the Proton donor/acceptor of the active site. Residue H157 participates in (S)-2,3,4,5-tetrahydrodipicolinate binding. Residue K160 is the Proton donor of the active site. Residue 166–167 (GT) coordinates (S)-2,3,4,5-tetrahydrodipicolinate.

The protein belongs to the DapB family.

Its subcellular location is the cytoplasm. The catalysed reaction is (S)-2,3,4,5-tetrahydrodipicolinate + NAD(+) + H2O = (2S,4S)-4-hydroxy-2,3,4,5-tetrahydrodipicolinate + NADH + H(+). It catalyses the reaction (S)-2,3,4,5-tetrahydrodipicolinate + NADP(+) + H2O = (2S,4S)-4-hydroxy-2,3,4,5-tetrahydrodipicolinate + NADPH + H(+). Its pathway is amino-acid biosynthesis; L-lysine biosynthesis via DAP pathway; (S)-tetrahydrodipicolinate from L-aspartate: step 4/4. In terms of biological role, catalyzes the conversion of 4-hydroxy-tetrahydrodipicolinate (HTPA) to tetrahydrodipicolinate. The protein is 4-hydroxy-tetrahydrodipicolinate reductase of Magnetococcus marinus (strain ATCC BAA-1437 / JCM 17883 / MC-1).